Reading from the N-terminus, the 502-residue chain is Type-2 serine--tRNA ligase (502 aa).

Residue A304 participates in L-serine binding. Residue C306 participates in Zn(2+) binding. R336 is a binding site for L-serine. Residues 336–338 (RYE) and 347–348 (RV) each bind ATP. Residues 353–355 (RVE) and Q400 each bind L-serine. E355 is a Zn(2+) binding site. E432 contacts ATP. Residue N435 coordinates L-serine. Zn(2+) is bound at residue C461. R468 serves as a coordination point for ATP.

The protein belongs to the class-II aminoacyl-tRNA synthetase family. Type-2 seryl-tRNA synthetase subfamily. In terms of assembly, homodimer. Zn(2+) serves as cofactor.

It localises to the cytoplasm. The enzyme catalyses tRNA(Ser) + L-serine + ATP = L-seryl-tRNA(Ser) + AMP + diphosphate + H(+). It carries out the reaction tRNA(Sec) + L-serine + ATP = L-seryl-tRNA(Sec) + AMP + diphosphate + H(+). Its pathway is aminoacyl-tRNA biosynthesis; selenocysteinyl-tRNA(Sec) biosynthesis; L-seryl-tRNA(Sec) from L-serine and tRNA(Sec): step 1/1. In terms of biological role, catalyzes the attachment of serine to tRNA(Ser). Is also able to aminoacylate tRNA(Sec) with serine, to form the misacylated tRNA L-seryl-tRNA(Sec), which will be further converted into selenocysteinyl-tRNA(Sec). This chain is Type-2 serine--tRNA ligase, found in Methanococcoides burtonii (strain DSM 6242 / NBRC 107633 / OCM 468 / ACE-M).